Consider the following 230-residue polypeptide: N-(5'-phosphoribosyl)anthranilate isomerase (230 aa).

It belongs to the TrpF family.

It carries out the reaction N-(5-phospho-beta-D-ribosyl)anthranilate = 1-(2-carboxyphenylamino)-1-deoxy-D-ribulose 5-phosphate. It participates in amino-acid biosynthesis; L-tryptophan biosynthesis; L-tryptophan from chorismate: step 3/5. The protein is N-(5'-phosphoribosyl)anthranilate isomerase of Thermosynechococcus vestitus (strain NIES-2133 / IAM M-273 / BP-1).